The primary structure comprises 152 residues: Coiled-coil domain-containing protein 182 (152 aa).

Residues alanine 46–isoleucine 109 adopt a coiled-coil conformation.

In Mus musculus (Mouse), this protein is Coiled-coil domain-containing protein 182 (Ccdc182).